A 224-amino-acid chain; its full sequence is ATP-dependent dethiobiotin synthetase BioD (224 aa).

Residue 14-19 coordinates ATP; that stretch reads GIGKTV. Position 18 (threonine 18) interacts with Mg(2+). Lysine 39 is an active-site residue. Residue serine 43 participates in substrate binding. Residues aspartate 56, 117–120, and 177–178 contribute to the ATP site; these read EGVG and NE. Mg(2+)-binding residues include aspartate 56 and glutamate 117.

This sequence belongs to the dethiobiotin synthetase family. In terms of assembly, homodimer. Requires Mg(2+) as cofactor.

The protein resides in the cytoplasm. It catalyses the reaction (7R,8S)-7,8-diammoniononanoate + CO2 + ATP = (4R,5S)-dethiobiotin + ADP + phosphate + 3 H(+). It functions in the pathway cofactor biosynthesis; biotin biosynthesis; biotin from 7,8-diaminononanoate: step 1/2. Functionally, catalyzes a mechanistically unusual reaction, the ATP-dependent insertion of CO2 between the N7 and N8 nitrogen atoms of 7,8-diaminopelargonic acid (DAPA, also called 7,8-diammoniononanoate) to form a ureido ring. The sequence is that of ATP-dependent dethiobiotin synthetase BioD from Xanthomonas campestris pv. campestris (strain 8004).